Here is a 507-residue protein sequence, read N- to C-terminus: ATP synthase subunit alpha, chloroplastic (507 aa).

Residue 170–177 (GDRQTGKT) participates in ATP binding.

This sequence belongs to the ATPase alpha/beta chains family. In terms of assembly, F-type ATPases have 2 components, CF(1) - the catalytic core - and CF(0) - the membrane proton channel. CF(1) has five subunits: alpha(3), beta(3), gamma(1), delta(1), epsilon(1). CF(0) has four main subunits: a, b, b' and c.

The protein resides in the plastid. Its subcellular location is the chloroplast thylakoid membrane. It catalyses the reaction ATP + H2O + 4 H(+)(in) = ADP + phosphate + 5 H(+)(out). Its function is as follows. Produces ATP from ADP in the presence of a proton gradient across the membrane. The alpha chain is a regulatory subunit. In Piper cenocladum (Ant piper), this protein is ATP synthase subunit alpha, chloroplastic.